The chain runs to 61 residues: Prophage outer membrane lipoprotein RzoR (61 aa).

The first 19 residues, 1-19, serve as a signal peptide directing secretion; the sequence is MRKLKMMLCVMMLPLVVVG. C20 is lipidated: N-palmitoyl cysteine. C20 is lipidated: S-diacylglycerol cysteine.

This sequence belongs to the lambdalikevirus o-spanin family. Homodimer; disulfide-linked. Interacts (via C-terminus) with RZ (via C-terminus). Part of the spanin complex which spans the entire periplasmic space. The spanin complex is composed of spanin, inner membrane subunit and spanin, outer membrane subunit.

The protein localises to the cell outer membrane. Functionally, component of the spanin complex that disrupts the outer membrane and causes cell lysis during virus exit. The spanin complex conducts the final step in cell lysis by disrupting the outer membrane after holin and endolysin action have permeabilized the inner membrane and degraded the host peptidoglycans. The polypeptide is Prophage outer membrane lipoprotein RzoR (rzoR) (Escherichia coli (strain K12)).